Reading from the N-terminus, the 175-residue chain is uncharacterized protein (175 aa).

The Macro domain maps to 1–173 (MYKNIIKLIS…VYKEKYKKLL (173 aa)).

This sequence belongs to the MacroD-type family.

This is an uncharacterized protein from Fusobacterium nucleatum subsp. nucleatum (strain ATCC 25586 / DSM 15643 / BCRC 10681 / CIP 101130 / JCM 8532 / KCTC 2640 / LMG 13131 / VPI 4355).